The primary structure comprises 391 residues: Flagellin (391 aa).

It belongs to the bacterial flagellin family.

Its subcellular location is the secreted. It localises to the bacterial flagellum. Flagellin is the subunit protein which polymerizes to form the filaments of bacterial flagella. The protein is Flagellin (flaA) of Bordetella bronchiseptica (strain ATCC BAA-588 / NCTC 13252 / RB50) (Alcaligenes bronchisepticus).